A 249-amino-acid polypeptide reads, in one-letter code: Proteasome subunit alpha type-7 (249 aa).

Belongs to the peptidase T1A family. As to quaternary structure, the 26S proteasome consists of a 20S proteasome core and two 19S regulatory subunits. The 20S proteasome core is a barrel-shaped complex made of 28 subunits that are arranged in four stacked rings. The two outer rings are each formed by seven alpha subunits, and the two inner rings are formed by seven beta subunits. The proteolytic activity is exerted by three beta-subunits PSMB5, PSMB6 and PSMB7. PSMA7 interacts directly with the PSMG1-PSMG2 heterodimer which promotes 20S proteasome assembly. Interacts with HIF1A. Interacts with RAB7A. Interacts with PRKN. Interacts with ABL1 and ABL2. Interacts with EMAP2. Interacts with MAVS.

The protein localises to the cytoplasm. It localises to the nucleus. In terms of biological role, component of the 20S core proteasome complex involved in the proteolytic degradation of most intracellular proteins. This complex plays numerous essential roles within the cell by associating with different regulatory particles. Associated with two 19S regulatory particles, forms the 26S proteasome and thus participates in the ATP-dependent degradation of ubiquitinated proteins. The 26S proteasome plays a key role in the maintenance of protein homeostasis by removing misfolded or damaged proteins that could impair cellular functions, and by removing proteins whose functions are no longer required. Associated with the PA200 or PA28, the 20S proteasome mediates ubiquitin-independent protein degradation. This type of proteolysis is required in several pathways including spermatogenesis (20S-PA200 complex) or generation of a subset of MHC class I-presented antigenic peptides (20S-PA28 complex). Inhibits the transactivation function of HIF-1A under both normoxic and hypoxia-mimicking conditions. The interaction with EMAP2 increases the proteasome-mediated HIF-1A degradation under the hypoxic conditions. Plays a role in hepatitis C virus internal ribosome entry site-mediated translation. Mediates nuclear translocation of the androgen receptor (AR) and thereby enhances androgen-mediated transactivation. Promotes MAVS degradation and thereby negatively regulates MAVS-mediated innate immune response. This chain is Proteasome subunit alpha type-7 (PSMA7), found in Gallus gallus (Chicken).